A 360-amino-acid chain; its full sequence is DNA replication and repair protein RecF (360 aa).

ATP is bound at residue 30 to 37; the sequence is GVNGAGKT.

It belongs to the RecF family.

It localises to the cytoplasm. In terms of biological role, the RecF protein is involved in DNA metabolism; it is required for DNA replication and normal SOS inducibility. RecF binds preferentially to single-stranded, linear DNA. It also seems to bind ATP. The chain is DNA replication and repair protein RecF from Thioalkalivibrio sulfidiphilus (strain HL-EbGR7).